Here is a 193-residue protein sequence, read N- to C-terminus: Erythropoietin (193 aa).

The first 27 residues, 1–27 (MGVHECPAWLWLLLSLLSLPLGLPVLG), serve as a signal peptide directing secretion. Cystine bridges form between C34–C188 and C56–C60. N51 carries an N-linked (GlcNAc...) asparagine glycan. N65 and N110 each carry an N-linked (GlcNAc...) asparagine glycan. Residue S153 is glycosylated (O-linked (GalNAc...) serine).

The protein belongs to the EPO/TPO family. Produced by kidney or liver of adult mammals and by liver of fetal or neonatal mammals.

The protein resides in the secreted. Its function is as follows. Hormone involved in the regulation of erythrocyte proliferation and differentiation and the maintenance of a physiological level of circulating erythrocyte mass. Binds to EPOR leading to EPOR dimerization and JAK2 activation thereby activating specific downstream effectors, including STAT1 and STAT3. The sequence is that of Erythropoietin (EPO) from Homo sapiens (Human).